The sequence spans 691 residues: Elongation factor G (691 aa).

A tr-type G domain is found at 8–282; that stretch reads ERVRNIGIAA…AVVDYLPAPV (275 aa). GTP-binding positions include 17-24, 81-85, and 135-138; these read AHIDAGKT, DTPGH, and NKMD.

The protein belongs to the TRAFAC class translation factor GTPase superfamily. Classic translation factor GTPase family. EF-G/EF-2 subfamily.

The protein localises to the cytoplasm. Its function is as follows. Catalyzes the GTP-dependent ribosomal translocation step during translation elongation. During this step, the ribosome changes from the pre-translocational (PRE) to the post-translocational (POST) state as the newly formed A-site-bound peptidyl-tRNA and P-site-bound deacylated tRNA move to the P and E sites, respectively. Catalyzes the coordinated movement of the two tRNA molecules, the mRNA and conformational changes in the ribosome. This is Elongation factor G from Prochlorococcus marinus (strain MIT 9313).